Here is a 308-residue protein sequence, read N- to C-terminus: Protein translocase subunit SecF (308 aa).

The next 6 helical transmembrane spans lie at 10 to 30 (LFFA…AIFG), 129 to 149 (LAVS…FRGV), 160 to 180 (IIAM…GGVL), 181 to 201 (FGWQ…GFSV), 241 to 261 (TQLM…GITL), and 264 to 284 (FAII…FIAA).

This sequence belongs to the SecD/SecF family. SecF subfamily. Forms a complex with SecD. Part of the essential Sec protein translocation apparatus which comprises SecA, SecYEG and auxiliary proteins SecDF. Other proteins may also be involved.

It is found in the cell membrane. Part of the Sec protein translocase complex. Interacts with the SecYEG preprotein conducting channel. SecDF uses the proton motive force (PMF) to complete protein translocation after the ATP-dependent function of SecA. The chain is Protein translocase subunit SecF from Anaerolinea thermophila (strain DSM 14523 / JCM 11388 / NBRC 100420 / UNI-1).